The primary structure comprises 117 residues: Hydrogenase maturation factor HypA (117 aa).

His-2 contacts Ni(2+). Zn(2+)-binding residues include Cys-73, Cys-76, Cys-89, and Cys-92.

This sequence belongs to the HypA/HybF family.

In terms of biological role, involved in the maturation of [NiFe] hydrogenases. Required for nickel insertion into the metal center of the hydrogenase. The polypeptide is Hydrogenase maturation factor HypA (Shewanella baltica (strain OS223)).